Reading from the N-terminus, the 523-residue chain is NAD(P)H-quinone oxidoreductase subunit 2 (523 aa).

14 helical membrane-spanning segments follow: residues 29–49, 57–77, 94–114, 123–143, 147–167, 182–202, 221–243, 255–275, 291–311, 317–337, 345–365, 389–409, 424–444, and 477–497; these read AIAPEGAVLVAMLATLLVDLA, WVPPICYAGLGTALVLLAQQW, LAIAFRAVVALSTLLSLLISW, PIGEYAAILLAATLGAMLLCG, LVSVFVSLETLSVASYLLAGY, LLVGSAAAAVFLYGASLLYGL, PLAALSLVFVLATVAFKIAAVPF, PTPVVAFLSVGSKAAGFALAL, LLFTVLAVLSMTLGNVVALAQ, MLAYSSIGQAGFVMIGLVCGT, VLYMAAYLFMNLGAFACIILF, LGLSLCLLSLGGIPPMLGFFG, LLVVVGLVTSVVSIYYYISVI, and IALVGCVVVTAVGGILSNPLF.

Belongs to the complex I subunit 2 family. As to quaternary structure, NDH-1 can be composed of about 15 different subunits; different subcomplexes with different compositions have been identified which probably have different functions.

Its subcellular location is the cellular thylakoid membrane. It catalyses the reaction a plastoquinone + NADH + (n+1) H(+)(in) = a plastoquinol + NAD(+) + n H(+)(out). It carries out the reaction a plastoquinone + NADPH + (n+1) H(+)(in) = a plastoquinol + NADP(+) + n H(+)(out). Its function is as follows. NDH-1 shuttles electrons from an unknown electron donor, via FMN and iron-sulfur (Fe-S) centers, to quinones in the respiratory and/or the photosynthetic chain. The immediate electron acceptor for the enzyme in this species is believed to be plastoquinone. Couples the redox reaction to proton translocation, and thus conserves the redox energy in a proton gradient. Cyanobacterial NDH-1 also plays a role in inorganic carbon-concentration. The polypeptide is NAD(P)H-quinone oxidoreductase subunit 2 (Prochlorococcus marinus (strain MIT 9303)).